The chain runs to 710 residues: Integrator complex subunit 10 (710 aa).

The tract at residues 366–393 (IHKKRKLAEGREKTMSSDDEDPSGKARS) is disordered. The span at 372-381 (LAEGREKTMS) shows a compositional bias: basic and acidic residues.

The protein belongs to the Integrator subunit 10 family. As to quaternary structure, component of the Integrator complex, composed of core subunits INTS1, INTS2, INTS3, INTS4, INTS5, INTS6, INTS7, INTS8, INTS9/RC74, INTS10, INTS11/CPSF3L, INTS12, INTS13, INTS14 and INTS15. The core complex associates with protein phosphatase 2A subunits PPP2CA and PPP2R1A, to form the Integrator-PP2A (INTAC) complex. INTS10 is part of the tail subcomplex, composed of INTS10, INTS13, INTS14 and INTS15.

The protein localises to the nucleus. Its function is as follows. Component of the integrator complex, a multiprotein complex that terminates RNA polymerase II (Pol II) transcription in the promoter-proximal region of genes. The integrator complex provides a quality checkpoint during transcription elongation by driving premature transcription termination of transcripts that are unfavorably configured for transcriptional elongation: the complex terminates transcription by (1) catalyzing dephosphorylation of the C-terminal domain (CTD) of Pol II subunit POLR2A/RPB1 and SUPT5H/SPT5, (2) degrading the exiting nascent RNA transcript via endonuclease activity and (3) promoting the release of Pol II from bound DNA. The integrator complex is also involved in terminating the synthesis of non-coding Pol II transcripts, such as enhancer RNAs (eRNAs), small nuclear RNAs (snRNAs), telomerase RNAs and long non-coding RNAs (lncRNAs). The chain is Integrator complex subunit 10 (INTS10) from Gallus gallus (Chicken).